The sequence spans 139 residues: Transcription antitermination protein NusB (139 aa).

It belongs to the NusB family.

Functionally, involved in transcription antitermination. Required for transcription of ribosomal RNA (rRNA) genes. Binds specifically to the boxA antiterminator sequence of the ribosomal RNA (rrn) operons. In Klebsiella pneumoniae (strain 342), this protein is Transcription antitermination protein NusB.